A 651-amino-acid polypeptide reads, in one-letter code: Protein SCARECROW 1 (651 aa).

Disordered regions lie at residues Met1–Leu33 and Ser188–Asp277. Pro residues predominate over residues Pro190–Gln228. Residues Thr253 to Gly280 are a coiled coil. Positions Ala254–Ala263 are enriched in low complexity. A compositionally biased stretch (basic and acidic residues) spans Ala264–Asp277. A GRAS domain is found at Lys274–Arg644. The segment at Leu281–Pro345 is leucine repeat I (LRI). Positions Leu288–Glu292 match the LxCxE motif motif. The segment at Phe364–Gly429 is VHIID. Positions Val395 to Asp399 match the VHIID motif. The segment at Ala439–Lys471 is leucine repeat II (LRII). Positions Val480–Asn567 are PFYRE. The tract at residues Ala570 to Arg644 is SAW.

The protein belongs to the GRAS family. As to quaternary structure, interacts with SHR1, but not with SHR2. In terms of tissue distribution, expressed in the initial daughter cell before its asymmetric division and remains expressed in the endodermal cell layer after the division.

It localises to the nucleus. Transcription factor required for quiescent center cells specification and maintenance of surrounding stem cells, and for the asymmetric cell division involved in radial pattern formation in roots. Essential for cell division but not differentiation of the ground tissue. Regulates the radial organization of the shoot axial organs. Restricts SHR movment and sequesters it into the nucleus of the endodermis. The polypeptide is Protein SCARECROW 1 (SCR1) (Oryza sativa subsp. japonica (Rice)).